Reading from the N-terminus, the 26-residue chain is Melittin (26 aa).

The residue at position 1 (Gly1) is an N-formylglycine; partial. Position 26 is a glutamine amide (Gln26).

This sequence belongs to the melittin family. Monomer (in solution and for integration into membranes), homotetramer (in solution and potentially as a toroidal pore in membranes), and potenially homomultimer (as a toroidal pore in membranes). Expressed by the venom gland.

The protein resides in the secreted. Its subcellular location is the target cell membrane. In terms of biological role, main toxin of bee venom with strong hemolytic activity and antimicrobial activity. It has enhancing effects on bee venom phospholipase A2 activity. This amphipathic toxin binds to negatively charged membrane surface and forms pore by inserting into lipid bilayers inducing the leakage of ions and molecules and the enhancement of permeability that ultimately leads to cell lysis. It acts as a voltage-gated pore with higher selectivity for anions over cations. The ion conductance has been shown to be voltage-dependent. Self-association of melittin in membranes is promoted by high ionic strength, but not by the presence of negatively charged lipids. In vivo, intradermal injection into healthy human volunteers produce sharp pain sensation and an inflammatory response. It produces pain by activating primary nociceptor cells directly and indirectly due to its ability to activate plasma membrane phospholipase A2 and its pore-forming activity. This Apis florea (Dwarf honeybee) protein is Melittin (MELT).